We begin with the raw amino-acid sequence, 403 residues long: S-arrestin (403 aa).

The interaction with RHO stretch occupies residues 11–19 (HVIFKKVSR). At threonine 231 the chain carries Phosphothreonine. Positions 381–403 (RQNLKDTGENTEGKKDEDAGQDE) are disordered.

It belongs to the arrestin family. As to quaternary structure, monomer. Homodimer. Homotetramer. Interacts with RHO (via the phosphorylated C-terminus). Detected in retina (at protein level).

The protein resides in the cell projection. The protein localises to the cilium. It localises to the photoreceptor outer segment. It is found in the membrane. Functionally, binds to photoactivated, phosphorylated RHO and terminates RHO signaling via G-proteins by competing with G-proteins for the same binding site on RHO. May play a role in preventing light-dependent degeneration of retinal photoreceptor cells. The protein is S-arrestin (Sag) of Mus musculus (Mouse).